Consider the following 513-residue polypeptide: ATP synthase subunit alpha (513 aa).

Residue 170 to 177 participates in ATP binding; the sequence is GDRQTGKT.

The protein belongs to the ATPase alpha/beta chains family. As to quaternary structure, F-type ATPases have 2 components, CF(1) - the catalytic core - and CF(0) - the membrane proton channel. CF(1) has five subunits: alpha(3), beta(3), gamma(1), delta(1), epsilon(1). CF(0) has three main subunits: a(1), b(2) and c(9-12). The alpha and beta chains form an alternating ring which encloses part of the gamma chain. CF(1) is attached to CF(0) by a central stalk formed by the gamma and epsilon chains, while a peripheral stalk is formed by the delta and b chains.

It localises to the cell inner membrane. The enzyme catalyses ATP + H2O + 4 H(+)(in) = ADP + phosphate + 5 H(+)(out). Its function is as follows. Produces ATP from ADP in the presence of a proton gradient across the membrane. The alpha chain is a regulatory subunit. The protein is ATP synthase subunit alpha of Teredinibacter turnerae (strain ATCC 39867 / T7901).